The chain runs to 407 residues: Peptidase T (407 aa).

His82 contributes to the Zn(2+) binding site. Asp84 is an active-site residue. Residue Asp143 participates in Zn(2+) binding. Glu177 acts as the Proton acceptor in catalysis. Glu178, Asp200, and His382 together coordinate Zn(2+).

This sequence belongs to the peptidase M20B family. Zn(2+) serves as cofactor.

Its subcellular location is the cytoplasm. It catalyses the reaction Release of the N-terminal residue from a tripeptide.. Its function is as follows. Cleaves the N-terminal amino acid of tripeptides. The chain is Peptidase T from Streptococcus equi subsp. equi (strain 4047).